Here is a 511-residue protein sequence, read N- to C-terminus: Ribonuclease Y (511 aa).

Residues 2-22 (ITTVIIAIVCFAVGGGLSYML) traverse the membrane as a helical segment. A KH domain is found at 201–261 (SVTVFHIESD…VRREIARLAL (61 aa)). The 94-residue stretch at 327-420 (LLQHARETAN…VQVCDAISGA (94 aa)) folds into the HD domain.

It belongs to the RNase Y family.

Its subcellular location is the cell membrane. Endoribonuclease that initiates mRNA decay. The protein is Ribonuclease Y of Phocaeicola vulgatus (strain ATCC 8482 / DSM 1447 / JCM 5826 / CCUG 4940 / NBRC 14291 / NCTC 11154) (Bacteroides vulgatus).